The following is a 432-amino-acid chain: Endosome-associated-trafficking regulator 1 (432 aa).

Ser18 carries the post-translational modification Phosphoserine. Residues 126–143 (DTTTSRIYPKEASRHPLG) are compositionally biased toward basic and acidic residues. The interval 126–145 (DTTTSRIYPKEASRHPLGLE) is disordered. Residue Ser148 is modified to Phosphoserine. The segment at 174 to 196 (LEEDEDDGWNITYLPSAVDQTHS) is required for interaction with PTPN13. The interval 226–250 (PPWTLSDTDSRISPASPAGSPNADF) is disordered. Phosphoserine is present on residues Ser241 and Ser245. Coiled coils occupy residues 262-289 (LRTLQISYEALKDENSKLRRKLNEVQSF) and 315-370 (FHDL…LRSG).

Belongs to the ENTR1 family. Found in a complex with ENTR1, PTPN13 and GIT1. Interacts with PTPN13 (via the FERM domain). Interacts (via N-terminus) with GIT1 (via N- and C-terminus); this interaction is direct. Interacts with NOD2. Interacts (via N-terminus) with IFT88. Interacts with VPS35. In terms of processing, phosphorylated.

Its subcellular location is the cytoplasm. It is found in the early endosome. The protein resides in the endosome. It localises to the recycling endosome. The protein localises to the midbody. Its subcellular location is the cytoskeleton. It is found in the microtubule organizing center. The protein resides in the centrosome. It localises to the cilium basal body. Functionally, may be involved in modulation of TNF response. May be involved in presentation of TNFRSF1A on the cell surface. Involved in the endosome-to-plasma membrane trafficking and recycling of SNX27-retromer-dependent cargo proteins, such as GLUT1. Involved in the regulation of cytokinesis; the function may involve PTPN13 and GIT1. Endosome-associated protein that plays a role in membrane receptor sorting, cytokinesis and ciliogenesis. Involved in the endosome-to-plasma membrane trafficking and recycling of SNX27-retromer-dependent cargo proteins, such as GLUT1. Involved in the regulation of cytokinesis; the function may involve PTPN13 and GIT1. Plays a role in the formation of cilia. Involved in cargo protein localization, such as PKD2, at primary cilia. Involved in the presentation of the tumor necrosis factor (TNF) receptor TNFRSF1A on the cell surface, and hence in the modulation of the TNF-induced apoptosis. This is Endosome-associated-trafficking regulator 1 from Mus musculus (Mouse).